Here is a 200-residue protein sequence, read N- to C-terminus: Recombination protein RecR (200 aa).

The segment at 57–72 (CSQCRDFTEEDTCNIC) adopts a C4-type zinc-finger fold. The Toprim domain occupies 81 to 176 (GLLCVVEMPA…KVSRIAHGIP (96 aa)).

The protein belongs to the RecR family.

May play a role in DNA repair. It seems to be involved in an RecBC-independent recombinational process of DNA repair. It may act with RecF and RecO. The chain is Recombination protein RecR from Haemophilus influenzae (strain 86-028NP).